A 678-amino-acid chain; its full sequence is uncharacterized protein (678 aa).

The interval 1–26 is disordered; the sequence is MGVHFDDNANTTWEATDPGVSSDCDG. 9 consecutive transmembrane segments (helical) span residues 119-139, 245-265, 317-337, 340-360, 371-391, 405-425, 443-463, 475-495, and 519-539; these read LLLL…LIYP, SFPC…GGCT, AAVV…YDSI, YWIN…PPLL, ELFS…YVVW, IAKV…NVTF, GALT…VIQA, YFKI…LPGL, and AYLF…RWDF.

The protein resides in the vacuole membrane. This is an uncharacterized protein from Saccharomyces cerevisiae (strain ATCC 204508 / S288c) (Baker's yeast).